The chain runs to 261 residues: Chanoclavine-I dehydrogenase ifgE (261 aa).

The N-terminal stretch at 1–20 (MASVKSRVFAITGGASGIGA) is a signal peptide. 7 residues coordinate NADP(+): isoleucine 18, lysine 48, aspartate 66, arginine 132, tyrosine 166, lysine 170, and threonine 201. Tyrosine 166 serves as the catalytic Proton acceptor. Lysine 170 serves as the catalytic Lowers pKa of active site Tyr.

The protein belongs to the short-chain dehydrogenases/reductases (SDR) family.

It functions in the pathway alkaloid biosynthesis; ergot alkaloid biosynthesis. Functionally, chanoclavine-I dehydrogenase; part of the gene cluster that mediates the biosynthesis of isofumigaclavines, fungal ergot alkaloids. The tryptophan dimethylallyltransferase ifgA catalyzes the first step of ergot alkaloid biosynthesis by condensing dimethylallyl diphosphate (DMAP) and tryptophan to form 4-dimethylallyl-L-tryptophan. The second step is catalyzed by the methyltransferase ifgB that methylates 4-dimethylallyl-L-tryptophan in the presence of S-adenosyl-L-methionine, resulting in the formation of N-methyl-dimethylallyl-L-tryptophan. The catalase ifgD and the FAD-dependent oxidoreductase ifgC then transform N-methyl-dimethylallyl-L-tryptophan to chanoclavine-I which is further oxidized by ifgE in the presence of NAD(+), resulting in the formation of chanoclavine-I aldehyde. The chanoclavine-I aldehyde reductases ifgG and/or fgaOx3 reduce chanoclavine-I aldehyde to dihydrochanoclavine-I aldehyde that spontaneously dehydrates to form 6,8-dimethyl-6,7-didehydroergoline. The festuclavine dehydrogenases ifgF1 and/or ifgF2 then catalyze the reduction of 6,8-dimethyl-6,7-didehydroergoline to form festuclavine. Hydrolysis of festuclavine by a yet undetermined cytochrome P450 monooxygenase (called ifgH) then leads to the formation of isofumigaclavine B which is in turn acetylated by ifgI to isofumigaclavine A. Penicillium roqueforti has interestingly at least two sets of genes for the consumption of chanoclavine-I aldehyde on three different loci, the OYEs ifgG/fgaOx3 and the festuclavine synthase homologs ifgF1/ifgF2. The reason for the duplication of these genes is unclear, probably to ensure the conversion of chanoclavine-I aldehyde by differential gene expression under various environmental conditions. The chain is Chanoclavine-I dehydrogenase ifgE from Penicillium roqueforti (strain FM164).